The primary structure comprises 150 residues: Probable host range protein 2 (150 aa).

The protein belongs to the orthopoxvirus OPG027 family.

Its function is as follows. Inhibits antiviral activity induced by type I interferons. Does not block signal transduction of IFN, but is important to counteract the host antiviral state induced by a pre-treatment with IFN. This is Probable host range protein 2 (OPG027) from Camelpox virus (strain M-96).